The chain runs to 257 residues: Imidazole glycerol phosphate synthase subunit HisF (257 aa).

Catalysis depends on residues aspartate 12 and aspartate 131.

The protein belongs to the HisA/HisF family. In terms of assembly, heterodimer of HisH and HisF.

The protein resides in the cytoplasm. The catalysed reaction is 5-[(5-phospho-1-deoxy-D-ribulos-1-ylimino)methylamino]-1-(5-phospho-beta-D-ribosyl)imidazole-4-carboxamide + L-glutamine = D-erythro-1-(imidazol-4-yl)glycerol 3-phosphate + 5-amino-1-(5-phospho-beta-D-ribosyl)imidazole-4-carboxamide + L-glutamate + H(+). It functions in the pathway amino-acid biosynthesis; L-histidine biosynthesis; L-histidine from 5-phospho-alpha-D-ribose 1-diphosphate: step 5/9. Its function is as follows. IGPS catalyzes the conversion of PRFAR and glutamine to IGP, AICAR and glutamate. The HisF subunit catalyzes the cyclization activity that produces IGP and AICAR from PRFAR using the ammonia provided by the HisH subunit. In Burkholderia multivorans (strain ATCC 17616 / 249), this protein is Imidazole glycerol phosphate synthase subunit HisF.